Consider the following 160-residue polypeptide: Large ribosomal subunit protein eL21 (160 aa).

2 stretches are compositionally biased toward basic and acidic residues: residues 112-123 (NDQKKKEAKEKG) and 136-146 (REAHFVRTNGK). The disordered stretch occupies residues 112 to 146 (NDQKKKEAKEKGTWVQLNGQPAPPREAHFVRTNGK).

It belongs to the eukaryotic ribosomal protein eL21 family. Component of the large ribosomal subunit.

It is found in the cytoplasm. It localises to the cytosol. The protein localises to the endoplasmic reticulum. Its function is as follows. Component of the large ribosomal subunit. The ribosome is a large ribonucleoprotein complex responsible for the synthesis of proteins in the cell. The polypeptide is Large ribosomal subunit protein eL21 (Rpl21) (Rattus norvegicus (Rat)).